A 654-amino-acid chain; its full sequence is MAKERIVLPSAEFKKNSNITLKDYKSLYKESIENPNKFWAKEANRLTWFKKWTKVLNHDFKNAKVEWFKGGKLNVSYNCLDRHISTPLKNKAALIWEGDNPSESKVLTYYDVYREVNRFANVLKKYGVKKGDRVLVYLPMIPELAITILACTRIGAIHSVVFGGFSPEALQSRIDDCKPKLIVTADGGFRGGKPIELKRNVDIALEKSKEDVKTVIVVRRTGNESGLVWKDGRDYWYHFLISDPDLSPYCKPESMDAEDPLFILYTSGSTGKPKGVLHTTGGYLLGVNLTFHYVFDIKPEDTYWCTADIGWVTGHSYLVYGPLSNGASSVMFEGVPSYPDAGRFWDVIDKYGVNIFYTAPTAIRALMREGLTHVQKRNLSSLRLLGSVGEPINPEAWEWYFKIIGKEKCPIVDTWWQTETGSIMITALPGAIPQKPGSATLPFFGVQPVLVDNDGKEINDKGEVSGNLCIKSPWPSMMRGVYGDSKRFFDTYFSQFKGYYFTGDGARRDKDGYYWITGRVDDVINVSGHRIGSAEVESALVENRSVAEAAVVGFPHDIKGQGIYAYVTVKEGIATNDTLKKELVAIVEKVIGKIARPDVIHWAPSLPKTRSGKIMRRILRKIASGEFEGLGDTSTLADPSVVQKLIEDKRKFHS.

CoA-binding positions include 190 to 193 and threonine 313; that span reads RGGK. ATP is bound by residues 389–391, 413–418, aspartate 504, and arginine 519; these read GEP and DTWWQT. Serine 527 contributes to the CoA binding site. Residue arginine 530 coordinates ATP. 2 residues coordinate Mg(2+): valine 541 and valine 546. Position 613 is an N6-acetyllysine (lysine 613).

This sequence belongs to the ATP-dependent AMP-binding enzyme family. Mg(2+) serves as cofactor. Acetylated. Deacetylation by the SIR2-homolog deacetylase activates the enzyme.

It catalyses the reaction acetate + ATP + CoA = acetyl-CoA + AMP + diphosphate. Its function is as follows. Catalyzes the conversion of acetate into acetyl-CoA (AcCoA), an essential intermediate at the junction of anabolic and catabolic pathways. AcsA undergoes a two-step reaction. In the first half reaction, AcsA combines acetate with ATP to form acetyl-adenylate (AcAMP) intermediate. In the second half reaction, it can then transfer the acetyl group from AcAMP to the sulfhydryl group of CoA, forming the product AcCoA. The protein is Acetyl-coenzyme A synthetase of Leptospira borgpetersenii serovar Hardjo-bovis (strain L550).